Here is a 2531-residue protein sequence, read N- to C-terminus: Talin (2531 aa).

The region spanning 87–401 (RPLRVRMMDE…GYIDIILKKK (315 aa)) is the FERM domain. The tract at residues 598-621 (GEKLLEAARGLAGAVRHLLKSAEP) is interaction with VIN1. Residues 2287-2526 (TDWVDPSDPN…KIRHDKYKRH (240 aa)) form the I/LWEQ domain. A disordered region spans residues 2466-2485 (AAKRSSEEGDDEEVSGGGQE).

As to quaternary structure, interacts with VIN1 (vinculin); the interaction facilitates VIN1 binding to F-actin.

It localises to the cytoplasm. It is found in the cytoskeleton. The protein resides in the cell cortex. Its function is as follows. Probably involved in connections of major cytoskeletal structures to the plasma membrane. In Oscarella pearsei (Sponge), this protein is Talin.